Consider the following 406-residue polypeptide: 4-hydroxy-3-methylbut-2-en-1-yl diphosphate synthase (ferredoxin) (406 aa).

Residues cysteine 315, cysteine 318, cysteine 349, and glutamate 356 each coordinate [4Fe-4S] cluster.

This sequence belongs to the IspG family. The cofactor is [4Fe-4S] cluster.

The enzyme catalyses (2E)-4-hydroxy-3-methylbut-2-enyl diphosphate + 2 oxidized [2Fe-2S]-[ferredoxin] + H2O = 2-C-methyl-D-erythritol 2,4-cyclic diphosphate + 2 reduced [2Fe-2S]-[ferredoxin] + H(+). It functions in the pathway isoprenoid biosynthesis; isopentenyl diphosphate biosynthesis via DXP pathway; isopentenyl diphosphate from 1-deoxy-D-xylulose 5-phosphate: step 5/6. Its function is as follows. Converts 2C-methyl-D-erythritol 2,4-cyclodiphosphate (ME-2,4cPP) into 1-hydroxy-2-methyl-2-(E)-butenyl 4-diphosphate. The protein is 4-hydroxy-3-methylbut-2-en-1-yl diphosphate synthase (ferredoxin) of Rippkaea orientalis (strain PCC 8801 / RF-1) (Cyanothece sp. (strain PCC 8801)).